The sequence spans 530 residues: Probable basic-leucine zipper transcription factor L (530 aa).

Composition is skewed to low complexity over residues M1–S17 and S24–S39. The interval M1 to K76 is disordered. In terms of domain architecture, bZIP spans V55–L118. The segment at K56 to K77 is basic motif. The segment at L83–I104 is leucine-zipper. Disordered stretches follow at residues N142–V177, S216–P258, and H389–N481. Composition is skewed to low complexity over residues R149–P176 and N220–N247. Polar residues predominate over residues L248–T257. Residues S436 to S478 show a composition bias toward low complexity.

The protein belongs to the bZIP family.

It localises to the nucleus. In terms of biological role, probable transcriptional regulator. In Dictyostelium discoideum (Social amoeba), this protein is Probable basic-leucine zipper transcription factor L (bzpL).